The primary structure comprises 435 residues: Serine--tRNA ligase (435 aa).

An L-serine-binding site is contributed by 239–241 (TAE). 270-272 (RAE) provides a ligand contact to ATP. An L-serine-binding site is contributed by E293. Position 357–360 (357–360 (EISS)) interacts with ATP. S393 contacts L-serine.

It belongs to the class-II aminoacyl-tRNA synthetase family. Type-1 seryl-tRNA synthetase subfamily. As to quaternary structure, homodimer. The tRNA molecule binds across the dimer.

It is found in the cytoplasm. The enzyme catalyses tRNA(Ser) + L-serine + ATP = L-seryl-tRNA(Ser) + AMP + diphosphate + H(+). It carries out the reaction tRNA(Sec) + L-serine + ATP = L-seryl-tRNA(Sec) + AMP + diphosphate + H(+). It functions in the pathway aminoacyl-tRNA biosynthesis; selenocysteinyl-tRNA(Sec) biosynthesis; L-seryl-tRNA(Sec) from L-serine and tRNA(Sec): step 1/1. Catalyzes the attachment of serine to tRNA(Ser). Is also able to aminoacylate tRNA(Sec) with serine, to form the misacylated tRNA L-seryl-tRNA(Sec), which will be further converted into selenocysteinyl-tRNA(Sec). This is Serine--tRNA ligase from Parvibaculum lavamentivorans (strain DS-1 / DSM 13023 / NCIMB 13966).